The following is a 124-amino-acid chain: Small ribosomal subunit protein uS12 (124 aa).

Asp-89 carries the 3-methylthioaspartic acid modification. The interval 102–124 (LDTSGVNNRKHGRSKYGTKRPKS) is disordered. Over residues 109 to 124 (NRKHGRSKYGTKRPKS) the composition is skewed to basic residues.

It belongs to the universal ribosomal protein uS12 family. Part of the 30S ribosomal subunit. Contacts proteins S8 and S17. May interact with IF1 in the 30S initiation complex.

With S4 and S5 plays an important role in translational accuracy. In terms of biological role, interacts with and stabilizes bases of the 16S rRNA that are involved in tRNA selection in the A site and with the mRNA backbone. Located at the interface of the 30S and 50S subunits, it traverses the body of the 30S subunit contacting proteins on the other side and probably holding the rRNA structure together. The combined cluster of proteins S8, S12 and S17 appears to hold together the shoulder and platform of the 30S subunit. This Francisella tularensis subsp. novicida (strain U112) protein is Small ribosomal subunit protein uS12.